The primary structure comprises 139 residues: MLIPRRVKHRKQHHPKRSGMSKGGTQVAFGEYGIQALTPAYVTNRQIESARIAMTRHIKRGGKVWINIYPDRPLTKKPAETRMGSGKGSPEWWIANVKPGRVMFELSYPNEKIAREALTRAAHKLPMKCRIVRREAGES.

The segment covering 1-19 has biased composition (basic residues); it reads MLIPRRVKHRKQHHPKRSG. The tract at residues 1–25 is disordered; the sequence is MLIPRRVKHRKQHHPKRSGMSKGGT.

The protein belongs to the universal ribosomal protein uL16 family. Part of the 50S ribosomal subunit.

Binds 23S rRNA and is also seen to make contacts with the A and possibly P site tRNAs. The polypeptide is Large ribosomal subunit protein uL16 (Streptomyces griseus subsp. griseus (strain JCM 4626 / CBS 651.72 / NBRC 13350 / KCC S-0626 / ISP 5235)).